The primary structure comprises 378 residues: RIB43A-like with coiled-coils protein 1 (378 aa).

Coiled coils occupy residues Arg153–Asp250 and Glu279–Phe334.

It belongs to the RIB43A family. As to quaternary structure, microtubule inner protein component of sperm flagellar doublet microtubules.

It is found in the cytoplasm. The protein localises to the cytoskeleton. It localises to the flagellum axoneme. This Rattus norvegicus (Rat) protein is RIB43A-like with coiled-coils protein 1 (Ribc1).